The primary structure comprises 248 residues: Pyridoxine 5'-phosphate synthase (248 aa).

Asn12 provides a ligand contact to 3-amino-2-oxopropyl phosphate. 14-15 (DH) provides a ligand contact to 1-deoxy-D-xylulose 5-phosphate. Arg23 is a 3-amino-2-oxopropyl phosphate binding site. Catalysis depends on His48, which acts as the Proton acceptor. 1-deoxy-D-xylulose 5-phosphate is bound by residues Arg50 and His55. Catalysis depends on Glu75, which acts as the Proton acceptor. A 1-deoxy-D-xylulose 5-phosphate-binding site is contributed by Thr105. His196 acts as the Proton donor in catalysis. Residues Gly197 and 218–219 (GH) each bind 3-amino-2-oxopropyl phosphate.

It belongs to the PNP synthase family. Homooctamer; tetramer of dimers.

It is found in the cytoplasm. The catalysed reaction is 3-amino-2-oxopropyl phosphate + 1-deoxy-D-xylulose 5-phosphate = pyridoxine 5'-phosphate + phosphate + 2 H2O + H(+). It participates in cofactor biosynthesis; pyridoxine 5'-phosphate biosynthesis; pyridoxine 5'-phosphate from D-erythrose 4-phosphate: step 5/5. Functionally, catalyzes the complicated ring closure reaction between the two acyclic compounds 1-deoxy-D-xylulose-5-phosphate (DXP) and 3-amino-2-oxopropyl phosphate (1-amino-acetone-3-phosphate or AAP) to form pyridoxine 5'-phosphate (PNP) and inorganic phosphate. The polypeptide is Pyridoxine 5'-phosphate synthase (Pseudomonas paraeruginosa (strain DSM 24068 / PA7) (Pseudomonas aeruginosa (strain PA7))).